We begin with the raw amino-acid sequence, 252 residues long: Oil body-associated protein 2A (252 aa).

The disordered stretch occupies residues 1-31 (MASSDGKPLPTPASVGGGGGSSTAPPGQPTT). Residues 22 to 31 (STAPPGQPTT) are compositionally biased toward low complexity.

This sequence belongs to the OBAP family.

The sequence is that of Oil body-associated protein 2A from Zea mays (Maize).